A 125-amino-acid chain; its full sequence is MADLAKIVEDLSTLTVLEAAELSKLLEEKWGVSAAAPVAVAAAGGAGAAAAVEEEKTEFDVVLVDAGANKINVIKEVRAITGLGLKEAKDLVEGAPKAVKEAVSKAEAADLKKKLEDAGAKVDVK.

This sequence belongs to the bacterial ribosomal protein bL12 family. In terms of assembly, homodimer. Part of the 50S ribosomal subunit; present in 6 copies per ribosome. Forms part of the ribosomal stalk which helps the ribosome interact with GTP-bound translation factors. Forms a heptameric L10(L12)2(L12)2(L12)2 complex, where L10 forms an elongated spine to which 3 L12 dimers bind in a sequential fashion.

In terms of biological role, forms part of the ribosomal stalk which helps the ribosome interact with GTP-bound translation factors. Is thus essential for accurate translation. The protein is Large ribosomal subunit protein bL12 of Agrobacterium fabrum (strain C58 / ATCC 33970) (Agrobacterium tumefaciens (strain C58)).